Here is a 263-residue protein sequence, read N- to C-terminus: Endonuclease 8 (263 aa).

Catalysis depends on Pro2, which acts as the Schiff-base intermediate with DNA. Glu3 serves as the catalytic Proton donor. Lys53 serves as the catalytic Proton donor; for beta-elimination activity. DNA contacts are provided by Gln70, Arg125, and Asn169. Residues 229–263 form an FPG-type zinc finger; that stretch reads KVFHRDGERCERCGGIIEKTTLSSRPFYWCPGCQH. The active-site Proton donor; for delta-elimination activity is Arg253.

It belongs to the FPG family. Zn(2+) is required as a cofactor.

The enzyme catalyses 2'-deoxyribonucleotide-(2'-deoxyribose 5'-phosphate)-2'-deoxyribonucleotide-DNA = a 3'-end 2'-deoxyribonucleotide-(2,3-dehydro-2,3-deoxyribose 5'-phosphate)-DNA + a 5'-end 5'-phospho-2'-deoxyribonucleoside-DNA + H(+). Functionally, involved in base excision repair of DNA damaged by oxidation or by mutagenic agents. Acts as a DNA glycosylase that recognizes and removes damaged bases. Has a preference for oxidized pyrimidines, such as thymine glycol, 5,6-dihydrouracil and 5,6-dihydrothymine. Has AP (apurinic/apyrimidinic) lyase activity and introduces nicks in the DNA strand. Cleaves the DNA backbone by beta-delta elimination to generate a single-strand break at the site of the removed base with both 3'- and 5'-phosphates. The chain is Endonuclease 8 from Klebsiella pneumoniae subsp. pneumoniae (strain ATCC 700721 / MGH 78578).